The following is a 237-amino-acid chain: Phosphoglycolate phosphatase (237 aa).

Asp15 serves as the catalytic Nucleophile. Mg(2+)-binding residues include Asp15, Asp17, and Asp177.

Belongs to the HAD-like hydrolase superfamily. CbbY/CbbZ/Gph/YieH family. Requires Mg(2+) as cofactor.

The enzyme catalyses 2-phosphoglycolate + H2O = glycolate + phosphate. It participates in organic acid metabolism; glycolate biosynthesis; glycolate from 2-phosphoglycolate: step 1/1. In terms of biological role, specifically catalyzes the dephosphorylation of 2-phosphoglycolate. Is involved in the dissimilation of the intracellular 2-phosphoglycolate formed during the DNA repair of 3'-phosphoglycolate ends, a major class of DNA lesions induced by oxidative stress. The protein is Phosphoglycolate phosphatase of Caulobacter vibrioides (strain ATCC 19089 / CIP 103742 / CB 15) (Caulobacter crescentus).